The primary structure comprises 417 residues: Testis-specific Y-encoded-like protein 5 (417 aa).

The span at 1 to 25 shows a compositional bias: basic residues; the sequence is MSGRSRGRKSSRAKNRGKGRAKARV. Disordered stretches follow at residues 1–55, 93–112, 127–202, and 391–417; these read MSGR…QVQA, AAGDHGQAAARPGPGKAASL, GTVG…EGSM, and KGKEKEGRQGPGKQPMETTQPGVSQSN. Over residues 27-37 the composition is skewed to basic and acidic residues; sequence PAPDDAPRDPD. Positions 93-103 are enriched in low complexity; the sequence is AAGDHGQAAAR. Residues 182–191 are compositionally biased toward basic and acidic residues; the sequence is GEEKKEERDA. Positions 406–417 are enriched in polar residues; sequence METTQPGVSQSN.

The protein belongs to the nucleosome assembly protein (NAP) family. In terms of assembly, interacts with USP7.

Its function is as follows. Involved in modulation of cell growth and cellular response to gamma radiation probably via regulation of the Akt signaling pathway. Involved in regulation of p53/TP53. Suppresses p53/TP53 protein levels and promotes its ubiquitination; the function is dependent on USP7 and independent on MDM2. Proposed to displace p53/TP53 from interaction with USP7. This Homo sapiens (Human) protein is Testis-specific Y-encoded-like protein 5 (TSPYL5).